A 364-amino-acid polypeptide reads, in one-letter code: Capsular polysaccharide phosphotransferase fcs1 (364 aa).

Belongs to the stealth family.

In terms of biological role, part of a group II capsule biosynthesis locus. This is Capsular polysaccharide phosphotransferase fcs1 (fcs1) from Haemophilus influenzae.